Here is a 345-residue protein sequence, read N- to C-terminus: Anthranilate phosphoribosyltransferase (345 aa).

Residues Gly-79, 82-83 (GD), Thr-87, 89-92 (NVST), 106-114 (KHGNRAVSG), and Ser-118 each bind 5-phospho-alpha-D-ribose 1-diphosphate. Anthranilate is bound at residue Gly-79. Ser-91 lines the Mg(2+) pocket. Position 109 (Asn-109) interacts with anthranilate. Arg-164 contacts anthranilate. Residues Asp-223 and Glu-224 each coordinate Mg(2+).

Belongs to the anthranilate phosphoribosyltransferase family. As to quaternary structure, homodimer. It depends on Mg(2+) as a cofactor.

It catalyses the reaction N-(5-phospho-beta-D-ribosyl)anthranilate + diphosphate = 5-phospho-alpha-D-ribose 1-diphosphate + anthranilate. Its pathway is amino-acid biosynthesis; L-tryptophan biosynthesis; L-tryptophan from chorismate: step 2/5. Its function is as follows. Catalyzes the transfer of the phosphoribosyl group of 5-phosphorylribose-1-pyrophosphate (PRPP) to anthranilate to yield N-(5'-phosphoribosyl)-anthranilate (PRA). This Sulfurisphaera tokodaii (strain DSM 16993 / JCM 10545 / NBRC 100140 / 7) (Sulfolobus tokodaii) protein is Anthranilate phosphoribosyltransferase.